The primary structure comprises 365 residues: MNILKISKQTLRNNIKIIREYIGNAKMCFPVKANAYGHGIEDIVENTHDLVDFFAVANSLEAFRVTAVAKNPVLVFGVIYYEYIEKMISENIRVSIQDYEDIEKLEQIAKELDKKVYAHININTGMNRMGVNYNDACRTIQRAYESDWLILEGVYSHLACADNRDHPTNIKQKNRFDSIVKFTKGLSQDIICHLSNSYGFLGQKGICYDMVRPGILSYGFLPEFYVDRVIREIKPIARLLSKVVKIITLQEGEGVGYSLIYRGFEGEQLAVIPIGYGDGFPRELGDRGFVNINDVMYPMAGRMSMDGLTVSLGINEYDVKVGDTVELISAIPRNRNSAFSIAKQTNTIEYDIMSTLNDRIIRKII.

The Proton acceptor; specific for D-alanine role is filled by K32. N6-(pyridoxal phosphate)lysine is present on K32. Residue R128 participates in substrate binding. The active-site Proton acceptor; specific for L-alanine is Y257. M305 serves as a coordination point for substrate.

Belongs to the alanine racemase family. Pyridoxal 5'-phosphate is required as a cofactor.

It catalyses the reaction L-alanine = D-alanine. The protein operates within amino-acid biosynthesis; D-alanine biosynthesis; D-alanine from L-alanine: step 1/1. Functionally, catalyzes the interconversion of L-alanine and D-alanine. May also act on other amino acids. The protein is Alanine racemase (alr) of Francisella tularensis subsp. mediasiatica (strain FSC147).